A 123-amino-acid chain; its full sequence is MTTLDPAIAGRLKRNPDGLVPAVVQQHDTGEVLMLGWMDDEALARTLTTGRATYWSRSRQEYWLKGETSGHVQWVKEVRLDCDGDTILVKVDQVGAACHTGDRTCFDADLLSGADRPGPDARG.

D81 serves as a coordination point for Mg(2+). Residue C82 participates in Zn(2+) binding. Mg(2+) is bound by residues D83 and D85. Residues C98 and C105 each contribute to the Zn(2+) site.

This sequence belongs to the PRA-CH family. Homodimer. Mg(2+) is required as a cofactor. Zn(2+) serves as cofactor.

The protein localises to the cytoplasm. The enzyme catalyses 1-(5-phospho-beta-D-ribosyl)-5'-AMP + H2O = 1-(5-phospho-beta-D-ribosyl)-5-[(5-phospho-beta-D-ribosylamino)methylideneamino]imidazole-4-carboxamide. It participates in amino-acid biosynthesis; L-histidine biosynthesis; L-histidine from 5-phospho-alpha-D-ribose 1-diphosphate: step 3/9. Functionally, catalyzes the hydrolysis of the adenine ring of phosphoribosyl-AMP. The protein is Phosphoribosyl-AMP cyclohydrolase of Nocardioides sp. (strain ATCC BAA-499 / JS614).